The sequence spans 285 residues: Bifunctional protein FolD (285 aa).

NADP(+) contacts are provided by residues 163-165 (GRS), Ser-188, and Ala-231.

It belongs to the tetrahydrofolate dehydrogenase/cyclohydrolase family. In terms of assembly, homodimer.

It carries out the reaction (6R)-5,10-methylene-5,6,7,8-tetrahydrofolate + NADP(+) = (6R)-5,10-methenyltetrahydrofolate + NADPH. The catalysed reaction is (6R)-5,10-methenyltetrahydrofolate + H2O = (6R)-10-formyltetrahydrofolate + H(+). It participates in one-carbon metabolism; tetrahydrofolate interconversion. In terms of biological role, catalyzes the oxidation of 5,10-methylenetetrahydrofolate to 5,10-methenyltetrahydrofolate and then the hydrolysis of 5,10-methenyltetrahydrofolate to 10-formyltetrahydrofolate. This chain is Bifunctional protein FolD, found in Oenococcus oeni (strain ATCC BAA-331 / PSU-1).